The sequence spans 334 residues: Holliday junction branch migration complex subunit RuvB (334 aa).

Positions 4–186 are large ATPase domain (RuvB-L); the sequence is ADRLIAPENP…FGITQRLEYY (183 aa). ATP contacts are provided by residues Ile25, Arg26, Gly67, Lys70, Thr71, Thr72, 133–135, Arg176, Tyr186, and Arg223; that span reads EDY. Residue Thr71 coordinates Mg(2+). The small ATPAse domain (RuvB-S) stretch occupies residues 187-257; the sequence is KVQDLQNIVQ…VADKALNMLD (71 aa). The interval 260 to 334 is head domain (RuvB-H); sequence AQGFDYMDRK…RAYLHFGIEK (75 aa). Positions 315 and 320 each coordinate DNA.

The protein belongs to the RuvB family. As to quaternary structure, homohexamer. Forms an RuvA(8)-RuvB(12)-Holliday junction (HJ) complex. HJ DNA is sandwiched between 2 RuvA tetramers; dsDNA enters through RuvA and exits via RuvB. An RuvB hexamer assembles on each DNA strand where it exits the tetramer. Each RuvB hexamer is contacted by two RuvA subunits (via domain III) on 2 adjacent RuvB subunits; this complex drives branch migration. In the full resolvosome a probable DNA-RuvA(4)-RuvB(12)-RuvC(2) complex forms which resolves the HJ.

The protein localises to the cytoplasm. It carries out the reaction ATP + H2O = ADP + phosphate + H(+). The RuvA-RuvB-RuvC complex processes Holliday junction (HJ) DNA during genetic recombination and DNA repair, while the RuvA-RuvB complex plays an important role in the rescue of blocked DNA replication forks via replication fork reversal (RFR). RuvA specifically binds to HJ cruciform DNA, conferring on it an open structure. The RuvB hexamer acts as an ATP-dependent pump, pulling dsDNA into and through the RuvAB complex. RuvB forms 2 homohexamers on either side of HJ DNA bound by 1 or 2 RuvA tetramers; 4 subunits per hexamer contact DNA at a time. Coordinated motions by a converter formed by DNA-disengaged RuvB subunits stimulates ATP hydrolysis and nucleotide exchange. Immobilization of the converter enables RuvB to convert the ATP-contained energy into a lever motion, pulling 2 nucleotides of DNA out of the RuvA tetramer per ATP hydrolyzed, thus driving DNA branch migration. The RuvB motors rotate together with the DNA substrate, which together with the progressing nucleotide cycle form the mechanistic basis for DNA recombination by continuous HJ branch migration. Branch migration allows RuvC to scan DNA until it finds its consensus sequence, where it cleaves and resolves cruciform DNA. The protein is Holliday junction branch migration complex subunit RuvB of Vibrio parahaemolyticus serotype O3:K6 (strain RIMD 2210633).